The following is a 490-amino-acid chain: MSRMAEQQLYIHGGYTSATSGRTFETINPANGNVLATVQAAGREDVDRAVKSAQQGQKIWAAMTAMERSRILRRAVDILRERNDELAKLETLDTGKAYSETSTVDIVTGADVLEYYAGLIPALEGSQIPLRETSFVYTRREPLGVVAGIGAWNYPIQIALWKSAPALAAGNAMIFKPSEVTPLTALKLAEIYSEAGLPDGVFNVLPGGGAETGQYLTEHPGIAKVSFTGGVASGKKVMANSAASSLKEVTMELGGKSPLIVFDDADLDLAADIAMMANFFSSGQVCTNGTRVFVPAKCKAAFEQKILARVERIRAGDVFDPQTNFGPLVSFPHRDNVLRYIAKGKEEGARVLCGGDVLKGDGFDNGAWVAPTVFTDCRDEMTIVREEIFGPVMSLLTYESEDEVIRRANDTDYGLAAGIVTADLNRAHRVMHQLEAGICWINTWGESPAEMPVGGYKHSGIGRENGVMTLQSYTQVKSIQVEMAKFQSIF.

K(+) contacts are provided by Thr-26, Ile-27, and Asp-93. 150-152 (GAW) serves as a coordination point for NAD(+). The active-site Charge relay system is Lys-162. An NAD(+)-binding site is contributed by 176 to 179 (KPSE). Residue Val-180 coordinates K(+). Residue 230-233 (GVAS) coordinates NAD(+). Leu-246 contributes to the K(+) binding site. Glu-252 (proton acceptor) is an active-site residue. Residues Gly-254, Cys-286, and Glu-387 each contribute to the NAD(+) site. The active-site Nucleophile is the Cys-286. Cys-286 is modified (cysteine sulfenic acid (-SOH)). Positions 457 and 460 each coordinate K(+). Catalysis depends on Glu-464, which acts as the Charge relay system.

Belongs to the aldehyde dehydrogenase family. Dimer of dimers. Requires K(+) as cofactor.

It carries out the reaction betaine aldehyde + NAD(+) + H2O = glycine betaine + NADH + 2 H(+). The protein operates within amine and polyamine biosynthesis; betaine biosynthesis via choline pathway; betaine from betaine aldehyde: step 1/1. Its function is as follows. Involved in the biosynthesis of the osmoprotectant glycine betaine. Catalyzes the irreversible oxidation of betaine aldehyde to the corresponding acid. In Shigella flexneri serotype 5b (strain 8401), this protein is Betaine aldehyde dehydrogenase.